An 84-amino-acid chain; its full sequence is Large ribosomal subunit protein bL31B (84 aa).

Belongs to the bacterial ribosomal protein bL31 family. Type B subfamily. Part of the 50S ribosomal subunit.

The protein is Large ribosomal subunit protein bL31B of Rhodococcus opacus (strain B4).